The primary structure comprises 156 residues: Holliday junction resolvase (156 aa).

It belongs to the RuvC family. Poxviruses-type subfamily. It depends on Mg(2+) as a cofactor.

Nuclease that specifically cleaves and resolves four-way DNA Holliday junctions into linear duplex products. The polypeptide is Holliday junction resolvase (Vertebrata (FPV)).